The sequence spans 504 residues: Cytochrome P450 6a9 (504 aa).

Cys-449 serves as a coordination point for heme.

This sequence belongs to the cytochrome P450 family. Requires heme as cofactor.

The protein resides in the endoplasmic reticulum membrane. The protein localises to the microsome membrane. Involved in the metabolism of insect hormones and in the breakdown of synthetic insecticides. This is Cytochrome P450 6a9 (Cyp6a9) from Drosophila melanogaster (Fruit fly).